The primary structure comprises 81 residues: Photosystem I iron-sulfur center (81 aa).

4Fe-4S ferredoxin-type domains follow at residues 2-31 and 37-68; these read SHSV…MVPW and GQIA…IRVY. Cys-11, Cys-14, Cys-17, Cys-21, Cys-48, Cys-51, Cys-54, and Cys-58 together coordinate [4Fe-4S] cluster.

The cyanobacterial PSI reaction center is composed of one copy each of PsaA,B,C,D,E,F,I,J,K,L,M and X, and forms trimeric complexes. [4Fe-4S] cluster is required as a cofactor.

The protein resides in the cellular thylakoid membrane. The catalysed reaction is reduced [plastocyanin] + hnu + oxidized [2Fe-2S]-[ferredoxin] = oxidized [plastocyanin] + reduced [2Fe-2S]-[ferredoxin]. Apoprotein for the two 4Fe-4S centers FA and FB of photosystem I (PSI); essential for photochemical activity. FB is the terminal electron acceptor of PSI, donating electrons to ferredoxin. The C-terminus interacts with PsaA/B/D and helps assemble the protein into the PSI complex. Required for binding of PsaD and PsaE to PSI. PSI is a plastocyanin/cytochrome c6-ferredoxin oxidoreductase, converting photonic excitation into a charge separation, which transfers an electron from the donor P700 chlorophyll pair to the spectroscopically characterized acceptors A0, A1, FX, FA and FB in turn. The protein is Photosystem I iron-sulfur center of Synechococcus sp. (strain RCC307).